The chain runs to 169 residues: MPESWVPAVGLTLVPSLGGFMGAYFVRGEGLRWYASLQKPSWHPPRWTLAPIWGTLYSAMGYGSYIVWKELGGFTEDAMVPLGLYTGQLALNWAWPPIFFGARQMGWALADLLLVSGVATATTLAWHRVSPPAARLLYPYLAWLAFATVLNYYVWRDNSGRRGGSRLPE.

Over 1-5 (MPESW) the chain is Mitochondrial intermembrane. The helical transmembrane segment at 6–26 (VPAVGLTLVPSLGGFMGAYFV) threads the bilayer. The Cytoplasmic portion of the chain corresponds to 27 to 46 (RGEGLRWYASLQKPSWHPPR). The chain crosses the membrane as a helical span at residues 47–67 (WTLAPIWGTLYSAMGYGSYIV). Residues 68 to 79 (WKELGGFTEDAM) lie on the Mitochondrial intermembrane side of the membrane. The chain crosses the membrane as a helical span at residues 80-100 (VPLGLYTGQLALNWAWPPIFF). The Cytoplasmic portion of the chain corresponds to 101 to 105 (GARQM). The helical transmembrane segment at 106-126 (GWALADLLLVSGVATATTLAW) threads the bilayer. At 127 to 134 (HRVSPPAA) the chain is on the mitochondrial intermembrane side. A helical membrane pass occupies residues 135 to 155 (RLLYPYLAWLAFATVLNYYVW). The Cytoplasmic portion of the chain corresponds to 156 to 169 (RDNSGRRGGSRLPE).

This sequence belongs to the TspO/BZRP family. Interacts with TSPOAP1. Interacts with MOST-1. May interact with STAR. Detected in liver (at protein level). Ubiquitous.

It localises to the mitochondrion membrane. The protein localises to the membrane. In terms of biological role, can bind protoporphyrin IX and may play a role in the transport of porphyrins and heme. Was initially identified as peripheral-type benzodiazepine receptor; can also bind isoquinoline carboxamides. Promotes the transport of cholesterol across mitochondrial membranes and may play a role in lipid metabolism, but its precise physiological role is controversial. According to some reports, it is not required for steroid hormone biosynthesis. In Mus musculus (Mouse), this protein is Translocator protein (Tspo).